Reading from the N-terminus, the 249-residue chain is Uridylate kinase (249 aa).

15 to 18 (KLSG) serves as a coordination point for ATP. The segment at 23–28 (GDEGFG) is involved in allosteric activation by GTP. Residue Gly-57 participates in UMP binding. Gly-58 and Arg-62 together coordinate ATP. UMP is bound by residues Asp-77 and 138–145 (TGNPFFTT). ATP is bound by residues Thr-165, Tyr-171, and Asp-174.

Belongs to the UMP kinase family. As to quaternary structure, homohexamer.

The protein localises to the cytoplasm. It carries out the reaction UMP + ATP = UDP + ADP. It participates in pyrimidine metabolism; CTP biosynthesis via de novo pathway; UDP from UMP (UMPK route): step 1/1. Its activity is regulated as follows. Allosterically activated by GTP. Inhibited by UTP. Functionally, catalyzes the reversible phosphorylation of UMP to UDP. The sequence is that of Uridylate kinase from Pseudoalteromonas translucida (strain TAC 125).